Reading from the N-terminus, the 37-residue chain is Mastoparan-VT (37 aa).

The propeptide occupies 1–22 (EALADPIADPVAGPNPEADPEA). AXPX repeat units lie at residues 4–7 (ADPI), 8–11 (ADPV), 12–15 (AGPN), and 18–21 (ADPE). Leu36 carries the leucine amide modification.

It belongs to the MCD family. Mastoparan subfamily. In terms of tissue distribution, expressed by the venom gland.

The protein resides in the secreted. Its subcellular location is the target cell membrane. In terms of biological role, antimicrobial peptide with potent activity against both Gram-positive (S.aureus MIC=50 ug/ml, and B.subtilis MIC=25 ug/ml) and Gram-negative bacteria (P.aeruginosa MIC=25 ug/ml, E.coli MIC=3-50 ug/ml, K.pneumoniae MIC=25 ug/ml). Exhibits little hemolytic activity on human erythrocytes. In Vespa tropica (Greater banded hornet), this protein is Mastoparan-VT.